Here is a 52-residue protein sequence, read N- to C-terminus: Large ribosomal subunit protein bL33 (52 aa).

It belongs to the bacterial ribosomal protein bL33 family.

This is Large ribosomal subunit protein bL33 (rpmG) from Chlamydia pneumoniae (Chlamydophila pneumoniae).